The chain runs to 290 residues: Putative beta-lactamase HcpC (290 aa).

An N-terminal signal peptide occupies residues 1-25 (MLENVKKSLFRVLCLGALCLGGLMA). 7 TPR repeats span residues 29-62 (PKELVGLGAKSYKEQDFTQAKKYFEKACDLKENS), 64-98 (CFNLGVLYYQGHGVEKNLKKAASFYSKACDLNYSN), 100-133 (CHLLGNLYYSGQGVSQNTNKALQYYSKACDLKYA), 134-170 (EGCASLGGIYHDGKVVTRDFKKAVEYFTKACDLNDGD), 172-205 (CTILGSLYDAGRGTPKDLKKALASYDKACDLKDS), 206-242 (PGCFNAGNMYHHGEGAAKNFKEALARYSKACELENGG), and 244-278 (CFNLGAMQYNGEGATRNEKQAIENFKKGCKLGAKG). 7 disulfide bridges follow: Cys56–Cys64, Cys92–Cys100, Cys128–Cys136, Cys164–Cys172, Cys200–Cys208, Cys236–Cys244, and Cys272–Cys280.

The protein belongs to the hcp beta-lactamase family.

It localises to the secreted. The catalysed reaction is a beta-lactam + H2O = a substituted beta-amino acid. May hydrolyze 6-aminopenicillinic acid and 7-aminocephalosporanic acid (ACA) derivatives. The chain is Putative beta-lactamase HcpC (hcpC) from Helicobacter pylori (strain J99 / ATCC 700824) (Campylobacter pylori J99).